We begin with the raw amino-acid sequence, 198 residues long: MNREEQLGVLESLLFAAGDAGLSTEQLTEVMEITHIEALNLLELLSERYNGNEDRGLILLELAGTFQLATKKAHAEFLRKLVEVPSNTVLSQASLETLAIIAYRQPVTRMEVDEVRGVQTDGPIRTLVAKGLVTDKGRVDGAGRAKLYVTTSEFLDAFGLNSLDDLPKLADPEAEDPDQSEMDLFFDRFNQSKEQEEE.

The interval 167-198 (PKLADPEAEDPDQSEMDLFFDRFNQSKEQEEE) is disordered. Positions 172 to 181 (PEAEDPDQSE) are enriched in acidic residues.

This sequence belongs to the ScpB family. In terms of assembly, homodimer. Homodimerization may be required to stabilize the binding of ScpA to the Smc head domains. Component of a cohesin-like complex composed of ScpA, ScpB and the Smc homodimer, in which ScpA and ScpB bind to the head domain of Smc. The presence of the three proteins is required for the association of the complex with DNA.

Its subcellular location is the cytoplasm. Its function is as follows. Participates in chromosomal partition during cell division. May act via the formation of a condensin-like complex containing Smc and ScpA that pull DNA away from mid-cell into both cell halves. This Listeria innocua serovar 6a (strain ATCC BAA-680 / CLIP 11262) protein is Segregation and condensation protein B.